Consider the following 176-residue polypeptide: Disulfide bond formation protein B (176 aa).

Topologically, residues Met-1–Ala-14 are cytoplasmic. A helical membrane pass occupies residues Trp-15–Tyr-31. At Phe-32–Ser-49 the chain is on the periplasmic side. Cys-41 and Cys-44 are joined by a disulfide. A helical membrane pass occupies residues Ala-50–Pro-65. At Ser-66 to Tyr-71 the chain is on the cytoplasmic side. The chain crosses the membrane as a helical span at residues Pro-72–Trp-89. The Periplasmic segment spans residues Lys-90–Gln-144. The cysteines at positions 104 and 130 are disulfide-linked. Residues Trp-145 to Ala-163 traverse the membrane as a helical segment. Topologically, residues Gln-164 to Arg-176 are cytoplasmic.

It belongs to the DsbB family.

The protein resides in the cell inner membrane. Functionally, required for disulfide bond formation in some periplasmic proteins. Acts by oxidizing the DsbA protein. The chain is Disulfide bond formation protein B from Pectobacterium atrosepticum (strain SCRI 1043 / ATCC BAA-672) (Erwinia carotovora subsp. atroseptica).